The primary structure comprises 635 residues: Threonine--tRNA ligase (635 aa).

The 62-residue stretch at 1 to 62 (MITITLPDGS…EHDAMLRIIT (62 aa)) folds into the TGS domain. The catalytic stretch occupies residues 244 to 535 (DHRKIGKVQD…LIEHYAGIWP (292 aa)). Zn(2+) is bound by residues C335, H386, and H512.

The protein belongs to the class-II aminoacyl-tRNA synthetase family. Homodimer. Zn(2+) serves as cofactor.

It localises to the cytoplasm. The catalysed reaction is tRNA(Thr) + L-threonine + ATP = L-threonyl-tRNA(Thr) + AMP + diphosphate + H(+). Catalyzes the attachment of threonine to tRNA(Thr) in a two-step reaction: L-threonine is first activated by ATP to form Thr-AMP and then transferred to the acceptor end of tRNA(Thr). Also edits incorrectly charged L-seryl-tRNA(Thr). The polypeptide is Threonine--tRNA ligase (Xylella fastidiosa (strain 9a5c)).